We begin with the raw amino-acid sequence, 1647 residues long: Transcription elongation factor SPT6 homolog (1647 aa).

A disordered region spans residues 1–209 (MARNAISDDE…SKKKKYRQGS (209 aa)). Residues 7–20 (SDDEEDHELEDDDG) are compositionally biased toward acidic residues. Residues 21–30 (EPVHGDPAEH) show a composition bias toward basic and acidic residues. Residues 31–67 (DENDDEEDDDDVGNEYENDGFIVNDEDEEEEEEEDEE) show a composition bias toward acidic residues. Basic residues predominate over residues 103–114 (KFKKRQYKRLKK). Over residues 132 to 151 (DSRGGTRRSAEDKIKDRLFD) the composition is skewed to basic and acidic residues. Residues 152 to 191 (DVDVDDPPDDVGDEEDLVVEEDVVGSEDEMADFIVDEDDE) show a composition bias toward acidic residues. In terms of domain architecture, S1 motif spans 1103–1174 (GRIVQASVRR…QRYQVFLICK (72 aa)). Positions 1429–1647 (PMRSPADHGS…RKSDGGGGGW (219 aa)) are disordered. Tandem repeats lie at residues 1443 to 1444 (GW) and 1452 to 1453 (GW). The tract at residues 1443 to 1647 (GWGSSQSEGG…RKSDGGGGGW (205 aa)) is 12 X 2 AA repeats of [WG]-[GW] repeats. Over residues 1462–1471 (SGRGGEYRNG) the composition is skewed to gly residues. Over residues 1496–1507 (RRDDMNSDRQDG) the composition is skewed to basic and acidic residues. Tandem repeats lie at residues 1511–1512 (WG), 1522–1523 (GW), 1530–1531 (GW), 1547–1548 (GW), 1563–1564 (WG), and 1574–1575 (GW). 4 stretches are compositionally biased toward gly residues: residues 1519 to 1532 (ADGGWGNSGGGGWG), 1539 to 1552 (KTGGGSTGGWGSES), 1561 to 1579 (GSWGSGSGGGGSGGWGNDS), and 1588 to 1600 (GGFGSGSGGGGSD). 4 repeat units span residues 1601-1602 (WG), 1615-1616 (GW), 1630-1631 (GW), and 1646-1647 (GW).

It belongs to the SPT6 family. In terms of assembly, interacts (via N-terminus) with IWS1. Expressed in shoot apical meristem, leaf primordia, vasculature of young leaves, inflorescence meristem, floral meristem, young floral organs, developing ovules and anthers.

Its subcellular location is the nucleus. In terms of biological role, transcription elongation factor that enhances the transcription elongation by RNA polymerase II (RNAPII). Plays an important role in regulating embryo apical and basal patterning during early embryogenesis, partly through negative regulation of the transcription factors PHABULOSA and PHAVOLUTA. This chain is Transcription elongation factor SPT6 homolog, found in Arabidopsis thaliana (Mouse-ear cress).